The primary structure comprises 355 residues: tRNA-specific 2-thiouridylase MnmA (355 aa).

Residues 6–13 (LLSGGVDS) and leucine 33 contribute to the ATP site. Cysteine 100 functions as the Nucleophile in the catalytic mechanism. Cysteine 100 and cysteine 195 are disulfide-bonded. ATP is bound at residue glycine 123. The tract at residues 145 to 147 (KDQ) is interaction with tRNA. Catalysis depends on cysteine 195, which acts as the Cysteine persulfide intermediate.

The protein belongs to the MnmA/TRMU family.

It localises to the cytoplasm. The catalysed reaction is S-sulfanyl-L-cysteinyl-[protein] + uridine(34) in tRNA + AH2 + ATP = 2-thiouridine(34) in tRNA + L-cysteinyl-[protein] + A + AMP + diphosphate + H(+). Functionally, catalyzes the 2-thiolation of uridine at the wobble position (U34) of tRNA, leading to the formation of s(2)U34. This Borreliella burgdorferi (strain ATCC 35210 / DSM 4680 / CIP 102532 / B31) (Borrelia burgdorferi) protein is tRNA-specific 2-thiouridylase MnmA.